Consider the following 451-residue polypeptide: Phosphoglucosamine mutase (451 aa).

Catalysis depends on serine 101, which acts as the Phosphoserine intermediate. Residues serine 101, aspartate 243, aspartate 245, and aspartate 247 each contribute to the Mg(2+) site. Serine 101 is modified (phosphoserine).

The protein belongs to the phosphohexose mutase family. Requires Mg(2+) as cofactor. In terms of processing, activated by phosphorylation.

It catalyses the reaction alpha-D-glucosamine 1-phosphate = D-glucosamine 6-phosphate. In terms of biological role, catalyzes the conversion of glucosamine-6-phosphate to glucosamine-1-phosphate. The sequence is that of Phosphoglucosamine mutase from Geobacter metallireducens (strain ATCC 53774 / DSM 7210 / GS-15).